Consider the following 79-residue polypeptide: ATP synthase subunit c (79 aa).

The next 2 membrane-spanning stretches (helical) occupy residues 11–31 (IAVA…IGIL) and 59–79 (LVDA…FAVI).

This sequence belongs to the ATPase C chain family. F-type ATPases have 2 components, F(1) - the catalytic core - and F(0) - the membrane proton channel. F(1) has five subunits: alpha(3), beta(3), gamma(1), delta(1), epsilon(1). F(0) has three main subunits: a(1), b(2) and c(10-14). The alpha and beta chains form an alternating ring which encloses part of the gamma chain. F(1) is attached to F(0) by a central stalk formed by the gamma and epsilon chains, while a peripheral stalk is formed by the delta and b chains.

The protein resides in the cell membrane. Functionally, f(1)F(0) ATP synthase produces ATP from ADP in the presence of a proton or sodium gradient. F-type ATPases consist of two structural domains, F(1) containing the extramembraneous catalytic core and F(0) containing the membrane proton channel, linked together by a central stalk and a peripheral stalk. During catalysis, ATP synthesis in the catalytic domain of F(1) is coupled via a rotary mechanism of the central stalk subunits to proton translocation. Its function is as follows. Key component of the F(0) channel; it plays a direct role in translocation across the membrane. A homomeric c-ring of between 10-14 subunits forms the central stalk rotor element with the F(1) delta and epsilon subunits. The sequence is that of ATP synthase subunit c from Buchnera aphidicola subsp. Baizongia pistaciae (strain Bp).